The chain runs to 127 residues: HTH-type transcriptional regulator ImmR (127 aa).

A compositionally biased stretch (basic and acidic residues) spans M1–Q12. The interval M1–A22 is disordered. In terms of domain architecture, HTH cro/C1-type spans L7–L61. The segment at residues Q18 to R37 is a DNA-binding region (H-T-H motif).

This Bacillus subtilis (strain 168) protein is HTH-type transcriptional regulator ImmR (immR).